Here is a 150-residue protein sequence, read N- to C-terminus: MERTFLAIKPDGVQRGLVGTIIQRFEQKGYTLVGLKLMRVSRELAEQHYGEHKDKPFFPGLVNFITSGPVVAMVWEGRGVIANARKLIGATNPLNAEPGTLRGDFAVDVGRNVIHGSDSPENAEREINLWFQTQELVPWEPALTSWVYEM.

Residues Lys9, Phe57, Arg85, Thr91, Arg102, and Asn112 each contribute to the ATP site. The Pros-phosphohistidine intermediate role is filled by His115.

It belongs to the NDK family. In terms of assembly, homotetramer. The cofactor is Mg(2+).

The protein localises to the cytoplasm. The enzyme catalyses a 2'-deoxyribonucleoside 5'-diphosphate + ATP = a 2'-deoxyribonucleoside 5'-triphosphate + ADP. The catalysed reaction is a ribonucleoside 5'-diphosphate + ATP = a ribonucleoside 5'-triphosphate + ADP. In terms of biological role, major role in the synthesis of nucleoside triphosphates other than ATP. The ATP gamma phosphate is transferred to the NDP beta phosphate via a ping-pong mechanism, using a phosphorylated active-site intermediate. This chain is Nucleoside diphosphate kinase, found in Thermosynechococcus vestitus (strain NIES-2133 / IAM M-273 / BP-1).